The chain runs to 80 residues: MLPATLLRXSGLGRVVRQARAYXEAAAAPXSAAGPGXMSFTFASPTQVFFNGANVRQVDVPTQTGAFGILASHVPTLQVL.

A mitochondrion-targeting transit peptide spans 1-22 (MLPATLLRXSGLGRVVRQARAY).

The protein belongs to the ATPase epsilon chain family. As to quaternary structure, component of the ATP synthase complex composed at least of ATP5F1A/subunit alpha, ATP5F1B/subunit beta, ATP5MC1/subunit c (homooctomer), MT-ATP6/subunit a, MT-ATP8/subunit 8, ATP5ME/subunit e, ATP5MF/subunit f, ATP5MG/subunit g, ATP5MK/subunit k, ATP5MJ/subunit j, ATP5F1C/subunit gamma, ATP5F1D/subunit delta, ATP5F1E/subunit epsilon, ATP5PF/subunit F6, ATP5PB/subunit b, ATP5PD/subunit d, ATP5PO/subunit OSCP. ATP synthase complex consists of a soluble F(1) head domain (subunits alpha(3) and beta(3)) - the catalytic core - and a membrane F(0) domain - the membrane proton channel (subunits c, a, 8, e, f, g, k and j). These two domains are linked by a central stalk (subunits gamma, delta, and epsilon) rotating inside the F1 region and a stationary peripheral stalk (subunits F6, b, d, and OSCP). Component of a complex composed at least by ATPIF1, ATP5F1A, ATP5F1B, ATP5F1C AND ATP5F1E.

The protein resides in the mitochondrion. It is found in the mitochondrion inner membrane. Its function is as follows. Subunit delta, of the mitochondrial membrane ATP synthase complex (F(1)F(0) ATP synthase or Complex V) that produces ATP from ADP in the presence of a proton gradient across the membrane which is generated by electron transport complexes of the respiratory chain. ATP synthase complex consist of a soluble F(1) head domain - the catalytic core - and a membrane F(1) domain - the membrane proton channel. These two domains are linked by a central stalk rotating inside the F(1) region and a stationary peripheral stalk. During catalysis, ATP synthesis in the catalytic domain of F(1) is coupled via a rotary mechanism of the central stalk subunits to proton translocation. In vivo, can only synthesize ATP although its ATP hydrolase activity can be activated artificially in vitro. With the central stalk subunit gamma, is essential for the biogenesis of F(1) catalytic part of the ATP synthase complex namely in the formation of F1 assembly intermediate. In Sus scrofa (Pig), this protein is ATP synthase F(1) complex subunit delta, mitochondrial.